The sequence spans 526 residues: Rho guanine nucleotide exchange factor 3 (526 aa).

A disordered region spans residues Glu20–Lys40. Phosphoserine is present on residues Ser47 and Ser70. In terms of domain architecture, DH spans Lys122–Lys304. The PH domain maps to Ile291–Glu449. 2 disordered regions span residues Glu464–Val502 and Glu507–Val526. Residues Ser466–Arg475 are compositionally biased toward polar residues.

In terms of assembly, interacts with RHOA and RHOB.

It is found in the cytoplasm. Functionally, acts as a guanine nucleotide exchange factor (GEF) for RhoA and RhoB GTPases. The sequence is that of Rho guanine nucleotide exchange factor 3 (ARHGEF3) from Macaca fascicularis (Crab-eating macaque).